The primary structure comprises 190 residues: MNILKDKINKEGIVIDNRILRVDMFLNHQLDIELLNEIGKEFKNRFKDKEINKILTVETSGIGIACVVAQYFNNVPVVFAKKHAGSNMGENVYESKVYSFTKDIEYTIKVSKDYIDKEDNILIIDDFLASGSAMSGLIDIAEKSGAIVEGVGIVIEKEFQKGRKIILNKGIQLESLAIIKGFEDNKVVFK.

Xanthine is bound by residues leucine 20 and asparagine 27. 129 to 133 (ASGSA) provides a ligand contact to 5-phospho-alpha-D-ribose 1-diphosphate. Lysine 157 contributes to the xanthine binding site.

The protein belongs to the purine/pyrimidine phosphoribosyltransferase family. Xpt subfamily. Homodimer.

It is found in the cytoplasm. The catalysed reaction is XMP + diphosphate = xanthine + 5-phospho-alpha-D-ribose 1-diphosphate. Its pathway is purine metabolism; XMP biosynthesis via salvage pathway; XMP from xanthine: step 1/1. In terms of biological role, converts the preformed base xanthine, a product of nucleic acid breakdown, to xanthosine 5'-monophosphate (XMP), so it can be reused for RNA or DNA synthesis. The chain is Xanthine phosphoribosyltransferase from Clostridium tetani (strain Massachusetts / E88).